Here is a 652-residue protein sequence, read N- to C-terminus: Beta-mannosyltransferase 1 (652 aa).

Topologically, residues 1 to 15 (MVDLFQWLKFYSMRR) are cytoplasmic. A helical transmembrane segment spans residues 16-34 (LGQVAITLVLLNLFVFLGY). Residues 35 to 652 (KFTPSTVIGS…LYQLQEEERS (618 aa)) lie on the Extracellular side of the membrane. Asparagine 57 is a glycosylation site (N-linked (GlcNAc...) asparagine). Positions 535–652 (PARYAKQMEN…LYQLQEEERS (118 aa)) form a coiled coil. Residues 536–621 (ARYAKQMENE…EAKENEAKKK (86 aa)) form a disordered region.

The protein belongs to the BMT family.

It localises to the membrane. Its function is as follows. Beta-mannosyltransferase involved in cell wall biosynthesis. Involved in the beta-mannosylation of outer chains of N-glycans. This chain is Beta-mannosyltransferase 1 (BMT1), found in Komagataella phaffii (strain ATCC 76273 / CBS 7435 / CECT 11047 / NRRL Y-11430 / Wegner 21-1) (Yeast).